The primary structure comprises 138 residues: Putative pre-16S rRNA nuclease (138 aa).

It belongs to the YqgF nuclease family.

It is found in the cytoplasm. Could be a nuclease involved in processing of the 5'-end of pre-16S rRNA. This Bacteroides fragilis (strain ATCC 25285 / DSM 2151 / CCUG 4856 / JCM 11019 / LMG 10263 / NCTC 9343 / Onslow / VPI 2553 / EN-2) protein is Putative pre-16S rRNA nuclease.